The chain runs to 158 residues: NAD(P)H-quinone oxidoreductase subunit J, chloroplastic (158 aa).

The protein belongs to the complex I 30 kDa subunit family. In terms of assembly, NDH is composed of at least 16 different subunits, 5 of which are encoded in the nucleus.

It is found in the plastid. The protein resides in the chloroplast thylakoid membrane. The catalysed reaction is a plastoquinone + NADH + (n+1) H(+)(in) = a plastoquinol + NAD(+) + n H(+)(out). It catalyses the reaction a plastoquinone + NADPH + (n+1) H(+)(in) = a plastoquinol + NADP(+) + n H(+)(out). NDH shuttles electrons from NAD(P)H:plastoquinone, via FMN and iron-sulfur (Fe-S) centers, to quinones in the photosynthetic chain and possibly in a chloroplast respiratory chain. The immediate electron acceptor for the enzyme in this species is believed to be plastoquinone. Couples the redox reaction to proton translocation, and thus conserves the redox energy in a proton gradient. The polypeptide is NAD(P)H-quinone oxidoreductase subunit J, chloroplastic (Solanum bulbocastanum (Wild potato)).